The following is a 199-amino-acid chain: Large ribosomal subunit protein bL25 (199 aa).

This sequence belongs to the bacterial ribosomal protein bL25 family. CTC subfamily. In terms of assembly, part of the 50S ribosomal subunit; part of the 5S rRNA/L5/L18/L25 subcomplex. Contacts the 5S rRNA. Binds to the 5S rRNA independently of L5 and L18.

Its function is as follows. This is one of the proteins that binds to the 5S RNA in the ribosome where it forms part of the central protuberance. The chain is Large ribosomal subunit protein bL25 from Herpetosiphon aurantiacus (strain ATCC 23779 / DSM 785 / 114-95).